We begin with the raw amino-acid sequence, 174 residues long: CASP-like protein 1 (174 aa).

Residues 1 to 25 (MDSKSGRSESAINIPESNSTKHKST) form a disordered region. Residues 1–46 (MDSKSGRSESAINIPESNSTKHKSTAVHTATKVAAVAPRGGGWRRG) are Cytoplasmic-facing. Residues 8-18 (SESAINIPESN) are compositionally biased toward polar residues. Residues 47-67 (VSIFDFILRICALAAALAATA) traverse the membrane as a helical segment. Residues 68 to 96 (TMGTTDQTLPFFTQIIQFQASYDDLPVFT) lie on the Extracellular side of the membrane. The chain crosses the membrane as a helical span at residues 97–117 (FFVVANGIASGYLVLSLPFSI). Over 118-119 (AT) the chain is Cytoplasmic. Residues 120–139 (IVRPHAAAIKLLLIIFDTQF) traverse the membrane as a helical segment. The Extracellular portion of the chain corresponds to 140-150 (NDFCQRVSGAV). Residues 151 to 171 (VASFVAAVILIFLVVLSAVAI) traverse the membrane as a helical segment. Over 172–174 (RKH) the chain is Cytoplasmic.

The protein belongs to the Casparian strip membrane proteins (CASP) family. Homodimer and heterodimers.

It localises to the cell membrane. In Triphysaria pusilla (Dwarf owl's-clover), this protein is CASP-like protein 1.